Reading from the N-terminus, the 354-residue chain is S-adenosylmethionine:tRNA ribosyltransferase-isomerase (354 aa).

This sequence belongs to the QueA family. In terms of assembly, monomer.

The protein localises to the cytoplasm. It carries out the reaction 7-aminomethyl-7-carbaguanosine(34) in tRNA + S-adenosyl-L-methionine = epoxyqueuosine(34) in tRNA + adenine + L-methionine + 2 H(+). Its pathway is tRNA modification; tRNA-queuosine biosynthesis. Transfers and isomerizes the ribose moiety from AdoMet to the 7-aminomethyl group of 7-deazaguanine (preQ1-tRNA) to give epoxyqueuosine (oQ-tRNA). The polypeptide is S-adenosylmethionine:tRNA ribosyltransferase-isomerase (Salmonella heidelberg (strain SL476)).